Consider the following 512-residue polypeptide: MVSHPMEKAANGASALETQTGELDQPERLRKIISVSSIAAGVQFGWALQLSLLTPYVQLLGIPHKWASLIWLCGPISGMLVQPIVGYHSDRCTSRFGRRRPFIVAGAGLVTVAVFLIGYAADIGHSMGDQLDKPPKTRAIAIFALGFWILDVANNTLQGPCRAFLADLSAGNAKKTRTANAFFSFFMAVGNVLGYAAGSYRNLYKVVPFTMTESCDLYCANLKTCFFLSITLLLIVTFVSLCYVKEKPWTPEPTADGKASNVPFFGEIFGAFKELKRPMWMLLIVTALNWIAWFPFLLFDTDWMGREVYGGNSDATATAASKKLYNDGVRAGALGLMLNAIVLGFMSLGVEWIGRKLGGAKRLWGIVNFILAICLAMTVVVTKQAENHRRDHGGAKTGPPGNVTAGALTLFAILGIPQAITFSIPFALASIFSTNSGAGQGLSLGVLNLAIVVPQMVISVGGGPFDELFGGGNIPAFVLGAIAAAVSGVLALTVLPSPPPDAPAFKATMGFH.

Topologically, residues 1-31 (MVSHPMEKAANGASALETQTGELDQPERLRK) are cytoplasmic. The chain crosses the membrane as a helical span at residues 32–52 (IISVSSIAAGVQFGWALQLSL). Residues 53–65 (LTPYVQLLGIPHK) lie on the Extracellular side of the membrane. The chain crosses the membrane as a helical span at residues 66-86 (WASLIWLCGPISGMLVQPIVG). Over 87-100 (YHSDRCTSRFGRRR) the chain is Cytoplasmic. A helical membrane pass occupies residues 101-121 (PFIVAGAGLVTVAVFLIGYAA). Over 122-138 (DIGHSMGDQLDKPPKTR) the chain is Extracellular. The chain crosses the membrane as a helical span at residues 139-159 (AIAIFALGFWILDVANNTLQG). At 160 to 177 (PCRAFLADLSAGNAKKTR) the chain is on the cytoplasmic side. Residues 178 to 198 (TANAFFSFFMAVGNVLGYAAG) form a helical membrane-spanning segment. Over 199–223 (SYRNLYKVVPFTMTESCDLYCANLK) the chain is Extracellular. The helical transmembrane segment at 224 to 244 (TCFFLSITLLLIVTFVSLCYV) threads the bilayer. Residues 245 to 278 (KEKPWTPEPTADGKASNVPFFGEIFGAFKELKRP) are Cytoplasmic-facing. The chain crosses the membrane as a helical span at residues 279–299 (MWMLLIVTALNWIAWFPFLLF). Residues 300-332 (DTDWMGREVYGGNSDATATAASKKLYNDGVRAG) lie on the Extracellular side of the membrane. Residues 333 to 353 (ALGLMLNAIVLGFMSLGVEWI) traverse the membrane as a helical segment. The Cytoplasmic segment spans residues 354 to 362 (GRKLGGAKR). The chain crosses the membrane as a helical span at residues 363 to 383 (LWGIVNFILAICLAMTVVVTK). Residues 384–407 (QAENHRRDHGGAKTGPPGNVTAGA) lie on the Extracellular side of the membrane. Asn402 is a glycosylation site (N-linked (GlcNAc...) asparagine). Residues 408 to 428 (LTLFAILGIPQAITFSIPFAL) form a helical membrane-spanning segment. Topologically, residues 429–440 (ASIFSTNSGAGQ) are cytoplasmic. Residues 441–461 (GLSLGVLNLAIVVPQMVISVG) traverse the membrane as a helical segment. Over 462–473 (GGPFDELFGGGN) the chain is Extracellular. The chain crosses the membrane as a helical span at residues 474-494 (IPAFVLGAIAAAVSGVLALTV). Residues 495–512 (LPSPPPDAPAFKATMGFH) are Cytoplasmic-facing.

It belongs to the glycoside-pentoside-hexuronide (GPH) cation symporter transporter (TC 2.A.2.4) family. In terms of assembly, homodimer. Interacts with SUC3 and SUC4. In terms of tissue distribution, expressed in leaves and, to a lower extent, in roots, flowers and stems. Highly specific to the phloem, exclusively localized in companion cells (at protein level).

Its subcellular location is the cell membrane. The catalysed reaction is sucrose(out) + H(+)(out) = sucrose(in) + H(+)(in). It functions in the pathway glycan biosynthesis; sucrose metabolism. Its activity is regulated as follows. Inhibited by protonophores (e.g. dinitrophenol and carbonyl cyanide m-chlorophenyl-hydrazone (CCCP)) and SH group inhibitors (e.g. N-ethylmaleimide (NEM) and p-chloromercuriphenyl sulphonic acid (PCMPS)). Its function is as follows. Responsible for the transport of sucrose into the cell, with the concomitant uptake of protons (symport system). Can also transport other glucosides such as maltose, arbutin (hydroquinone-beta-D-glucoside), salicin (2-(hydroxymethyl)phenyl-beta-D-glucoside), alpha-phenylglucoside, beta-phenylglucoside, alpha-paranitrophenylglucoside, beta-paranitrophenylglucoside, and paranitrophenyl-beta-thioglucoside. May also transport biotin. Required for apoplastic phloem sucrose loading in source tissues (e.g. leaves) in order to transport it to sink tissues (e.g. roots, flowers). The protein is Sucrose transport protein SUC2 of Arabidopsis thaliana (Mouse-ear cress).